The primary structure comprises 880 residues: DNA-directed RNA polymerase subunit Rpo1N (880 aa).

Positions 58, 61, 68, 71, 98, 101, 146, and 149 each coordinate Zn(2+). Residues Asp-456, Asp-458, and Asp-460 each contribute to the Mg(2+) site. Zn(2+)-binding residues include Arg-573, Cys-575, Cys-580, His-582, and Ser-584.

This sequence belongs to the RNA polymerase beta' chain family. In terms of assembly, part of the 13-subunit RNA polymerase complex. Interacts with TFS4. As to quaternary structure, (Microbial infection) Binds viral protein RIP, which blocks global transcription. It depends on Mg(2+) as a cofactor. Zn(2+) serves as cofactor.

The protein localises to the cytoplasm. It carries out the reaction RNA(n) + a ribonucleoside 5'-triphosphate = RNA(n+1) + diphosphate. (Microbial infection) Binds to viral protein RIP (AC Q3V4R7), which inhibits global transcription. DNA-dependent RNA polymerase (RNAP) catalyzes the transcription of DNA into RNA using the four ribonucleoside triphosphates as substrates. Forms the clamp head domain. The chain is DNA-directed RNA polymerase subunit Rpo1N from Sulfolobus acidocaldarius (strain ATCC 33909 / DSM 639 / JCM 8929 / NBRC 15157 / NCIMB 11770).